An 829-amino-acid chain; its full sequence is ATP-dependent RNA helicase drs1 (829 aa).

Disordered stretches follow at residues 1 to 96 (MAPS…MDTE) and 145 to 295 (RRER…MSSF). Positions 20–32 (DNEEDIPLEEEQE) are enriched in acidic residues. Residues 48–59 (KQKKKNNKKSKK) show a composition bias toward basic residues. The span at 63-78 (TEDDDDEAETKEDDAA) shows a compositional bias: acidic residues. The span at 150–163 (AAKEGKTTATKEEE) shows a compositional bias: basic and acidic residues. Acidic residues-rich tracts occupy residues 164-190 (DKMEVDEEEDDIEEIDVDLDDDEDGVL), 218-228 (DGEDEDSEGED), 235-246 (DEDEGDASDDDS), and 258-271 (QSSDDEEGIDEEEE). Residues 272-291 (AKMKEFFAPEEENQPKKKGE) are compositionally biased toward basic and acidic residues. Residues 293–321 (SSFQEMSLSRPILRGLTSVGFTKPTPIQA) carry the Q motif motif. In terms of domain architecture, Helicase ATP-binding spans 324 to 498 (IPISLMGKDV…RAGLNKPVRI (175 aa)). 337-344 (AVTGSGKT) lines the ATP pocket. The short motif at 446 to 449 (DEAD) is the DEAD box element. Residues 528-707 (YLLHICKTIY…EKQLQNMEMQ (180 aa)) enclose the Helicase C-terminal domain. A disordered region spans residues 728–829 (TWFETQEDKK…KGGKGKGRRK (102 aa)). Basic and acidic residues predominate over residues 749–791 (GVRDKLKSKNEGKLSNKDRKKLDTMQERKQERTYKKGSAERAG). The segment covering 800-815 (KVVKKVGRSAGPKKKG) has biased composition (basic residues).

This sequence belongs to the DEAD box helicase family. DDX27/DRS1 subfamily. In terms of assembly, associates with pre-ribosomal particles.

The protein resides in the nucleus. It localises to the nucleolus. The enzyme catalyses ATP + H2O = ADP + phosphate + H(+). Functionally, ATP-binding RNA helicase involved in ribosome assembly. This is ATP-dependent RNA helicase drs1 (drh-11) from Neurospora crassa (strain ATCC 24698 / 74-OR23-1A / CBS 708.71 / DSM 1257 / FGSC 987).